A 662-amino-acid chain; its full sequence is UvrABC system protein B (662 aa).

One can recognise a Helicase ATP-binding domain in the interval 31–188; the sequence is DNIEGGEKAQ…NDLVDIQFER (158 aa). ATP is bound at residue 44-51; that stretch reads GATGTGKT. The Beta-hairpin signature appears at 97–120; it reads YYDYYQPEAYVPSSDTYIEKDSSV. A Helicase C-terminal domain is found at 435–601; the sequence is QIDDLLGEIN…TIKKEIRDLI (167 aa). One can recognise a UVR domain in the interval 626 to 661; it reads KELVKKLEKQMQEAVEVLDFELAAQIRDMMLEVKAL.

This sequence belongs to the UvrB family. In terms of assembly, forms a heterotetramer with UvrA during the search for lesions. Interacts with UvrC in an incision complex.

It localises to the cytoplasm. The UvrABC repair system catalyzes the recognition and processing of DNA lesions. A damage recognition complex composed of 2 UvrA and 2 UvrB subunits scans DNA for abnormalities. Upon binding of the UvrA(2)B(2) complex to a putative damaged site, the DNA wraps around one UvrB monomer. DNA wrap is dependent on ATP binding by UvrB and probably causes local melting of the DNA helix, facilitating insertion of UvrB beta-hairpin between the DNA strands. Then UvrB probes one DNA strand for the presence of a lesion. If a lesion is found the UvrA subunits dissociate and the UvrB-DNA preincision complex is formed. This complex is subsequently bound by UvrC and the second UvrB is released. If no lesion is found, the DNA wraps around the other UvrB subunit that will check the other stand for damage. The sequence is that of UvrABC system protein B from Streptococcus pneumoniae (strain ATCC 700669 / Spain 23F-1).